The following is a 275-amino-acid chain: Elongation factor Ts (275 aa).

An involved in Mg(2+) ion dislocation from EF-Tu region spans residues 76-79; the sequence is TDFV.

Belongs to the EF-Ts family.

It is found in the cytoplasm. Functionally, associates with the EF-Tu.GDP complex and induces the exchange of GDP to GTP. It remains bound to the aminoacyl-tRNA.EF-Tu.GTP complex up to the GTP hydrolysis stage on the ribosome. The polypeptide is Elongation factor Ts (Rhodococcus jostii (strain RHA1)).